Consider the following 244-residue polypeptide: Venom nerve growth factor (244 aa).

The N-terminal stretch at 1–18 is a signal peptide; that stretch reads MSMLCYTLIIAFLIGIWA. Positions 19-125 are excised as a propeptide; sequence APKSEDNVSL…SLNRNIRAKR (107 aa). Cystine bridges form between C139–C204, C182–C232, and C192–C234. N-linked (GlcNAc...) asparagine glycosylation is present at N148.

The protein belongs to the NGF-beta family. In terms of assembly, homodimer; non-covalently linked. Post-translationally, N-glycosylated. In terms of tissue distribution, expressed by the venom gland.

It is found in the secreted. Nerve growth factor is important for the development and maintenance of the sympathetic and sensory nervous systems. It stimulates division and differentiation of sympathetic and embryonic sensory neurons as well as basal forebrain cholinergic neurons in the brain. Its relevance in the snake venom is not clear. However, it has been shown to inhibit metalloproteinase-dependent proteolysis of platelet glycoprotein Ib alpha, suggesting a metalloproteinase inhibition to prevent metalloprotease autodigestion and/or protection against prey proteases. Binds a lipid between the two protein chains in the homodimer. The lipid-bound form promotes histamine relase from mouse mast cells, contrary to the lipid-free form. It promotes neurite outgrowth in rat PC12 pheochromocytoma cells. This Macrovipera lebetinus (Levantine viper) protein is Venom nerve growth factor.